Here is a 252-residue protein sequence, read N- to C-terminus: 5'-nucleotidase SurE (252 aa).

Residues aspartate 8, aspartate 9, serine 39, and asparagine 95 each coordinate a divalent metal cation.

This sequence belongs to the SurE nucleotidase family. It depends on a divalent metal cation as a cofactor.

Its subcellular location is the cytoplasm. The enzyme catalyses a ribonucleoside 5'-phosphate + H2O = a ribonucleoside + phosphate. Its function is as follows. Nucleotidase that shows phosphatase activity on nucleoside 5'-monophosphates. The polypeptide is 5'-nucleotidase SurE (Clostridium botulinum (strain Loch Maree / Type A3)).